The primary structure comprises 1377 residues: DNA-directed RNA polymerase subunit beta (1377 aa).

The protein belongs to the RNA polymerase beta chain family. As to quaternary structure, the RNAP catalytic core consists of 2 alpha, 1 beta, 1 beta' and 1 omega subunit. When a sigma factor is associated with the core the holoenzyme is formed, which can initiate transcription.

It carries out the reaction RNA(n) + a ribonucleoside 5'-triphosphate = RNA(n+1) + diphosphate. DNA-dependent RNA polymerase catalyzes the transcription of DNA into RNA using the four ribonucleoside triphosphates as substrates. This is DNA-directed RNA polymerase subunit beta from Orientia tsutsugamushi (strain Boryong) (Rickettsia tsutsugamushi).